We begin with the raw amino-acid sequence, 435 residues long: MLFPVLHLPKAMKFSSFSLIASSLLSLVAAAPVTLLKRDSRWDYANDKIYGVNIGGWLVLEPFITPSLFEAVSSDVPVDEYHYTEALGKEEAEKRLQEHWSTWIKEEDFKGMANAGLNFVRIPIGYWAFQLAEGDPYVQGQQEYLDKALEWCAKYGLKAWVDLHGAPGSQNGFDNSGKRGEIGWQNTTGYVDLTVQVLDQLTSKYGGSNYSDVIIGIELLNEPLGSYLDFDQLVDFYNKGYQLVRNNGNAPVIIHDAYLPDHTFDNVLNTEQDPNVWEVIVDHHHYQVFDEGSLSQSIDEHVSTACGWGQSENTEYHYSLCGEWTAALTDCAKWLNGAGRGARYDATFGGGNYIGSCDQLYTANYDYFTPEVISNYRRYVEAQMDSFLYGKNAGWVFWCWKTENTIEWDMQRLLGLGIIPQPLDDRQYPNQCGFS.

A signal peptide spans 1–30; the sequence is MLFPVLHLPKAMKFSSFSLIASSLLSLVAA. The active-site Proton donor is the E222. Disulfide bonds link C306-C432 and C331-C357. Residue E323 is the Nucleophile of the active site.

Belongs to the glycosyl hydrolase 5 (cellulase A) family.

Its subcellular location is the secreted. The catalysed reaction is Successive hydrolysis of beta-D-glucose units from the non-reducing ends of (1-&gt;3)-beta-D-glucans, releasing alpha-glucose.. Its function is as follows. Beta-glucanases participate in the metabolism of beta-glucan, the main structural component of the cell wall. It could also function biosynthetically as a transglycosylase. This Pichia angusta (Yeast) protein is Glucan 1,3-beta-glucosidase.